The primary structure comprises 336 residues: MKEPPSLLWGLDPVFLSHARLYIKDILELKESNQVPGIFFYKDHPIKQVDILGTVVCVREKDAFYSYGDVHRSTSGANDLDGLVQELHRQESSKAKMEIGDVIRVRGYIKVFRMQREVVASIFYKVDDPTLDMQIMRMLELPYLYKHAYDKPFILPEDMTNQSQEQPNQAVLQRSGLISLLSEKIMNFVKENTIYNFYLPELESMPSLLSEATNPHYITESDSNVSSSSREIRSLFKEAIHILLKRGIVYQKGQNKDVYYVTDHDKELHKLTLNMIKQDCSRQGHAEKGCHFLHILNCVQQDFGSCINEAILQRVINALEQNSDIVSTMEKYYTAF.

Residues 49-126 (VDILGTVVCV…EVVASIFYKV (78 aa)) constitute a DNA-binding region (OB). 2 winged helix-turn-helix (wHTH) regions span residues 162 to 263 (QSQE…YVTD) and 264 to 336 (HDKE…YTAF).

It belongs to the CTC1 family. Component of the CST complex.

Its subcellular location is the nucleus. It is found in the chromosome. It localises to the telomere. Its function is as follows. Component of the CST complex proposed to act as a specialized replication factor promoting DNA replication under conditions of replication stress or natural replication barriers such as the telomere duplex. The CST complex binds single-stranded DNA with high affinity in a sequence-independent manner, while isolated subunits bind DNA with low affinity by themselves. Initially the CST complex has been proposed to protect telomeres from DNA degradation. However, the CST complex has been shown to be involved in several aspects of telomere replication. The protein is CST complex subunit STN1 of Aquarana catesbeiana (American bullfrog).